The sequence spans 505 residues: Maturase K (505 aa).

The protein belongs to the intron maturase 2 family. MatK subfamily.

The protein resides in the plastid. It localises to the chloroplast. Functionally, usually encoded in the trnK tRNA gene intron. Probably assists in splicing its own and other chloroplast group II introns. This Cubanola domingensis protein is Maturase K.